We begin with the raw amino-acid sequence, 263 residues long: Glutathione S-transferase F8, chloroplastic (263 aa).

The transit peptide at 1-49 directs the protein to the chloroplast; that stretch reads MGAIQARLPLFLSPPSIKHHTFLHSSSSNSNFKIRSNKSSSSSSSSIIM. A GST N-terminal domain is found at 50-131; the sequence is ASIKVHGVPM…YLAEEYSEKG (82 aa). Residues 60–61, 89–90, 102–103, and 115–116 each bind glutathione; these read ST, HK, QI, and ES. The GST C-terminal domain occupies 139 to 263; that stretch reads CKKVKATTNV…WAKVIDLQKQ (125 aa). Residue Thr177 is modified to Phosphothreonine.

This sequence belongs to the GST superfamily. Phi family. Isoform 1 is predominantly expressed in leaves and isoform 2 in roots.

It is found in the plastid. Its subcellular location is the chloroplast. The protein localises to the cytoplasm. The protein resides in the cytosol. The enzyme catalyses RX + glutathione = an S-substituted glutathione + a halide anion + H(+). In vitro, possesses glutathione S-transferase activity toward 1-chloro-2,4-dinitrobenzene (CDNB) and glutathione peroxidase activity toward cumene hydroperoxide and linoleic acid-13-hydroperoxide. May be involved in the conjugation of reduced glutathione to a wide number of exogenous and endogenous hydrophobic electrophiles and have a detoxification role against certain herbicides. This is Glutathione S-transferase F8, chloroplastic (GSTF8) from Arabidopsis thaliana (Mouse-ear cress).